A 223-amino-acid polypeptide reads, in one-letter code: Ribose-5-phosphate isomerase A (223 aa).

Residues 32–35 (TGST), 85–88 (DGAD), and 98–101 (KGGG) each bind substrate. Glu-107 (proton acceptor) is an active-site residue. A substrate-binding site is contributed by Lys-125.

This sequence belongs to the ribose 5-phosphate isomerase family. As to quaternary structure, homodimer.

It carries out the reaction aldehydo-D-ribose 5-phosphate = D-ribulose 5-phosphate. The protein operates within carbohydrate degradation; pentose phosphate pathway; D-ribose 5-phosphate from D-ribulose 5-phosphate (non-oxidative stage): step 1/1. In terms of biological role, catalyzes the reversible conversion of ribose-5-phosphate to ribulose 5-phosphate. The polypeptide is Ribose-5-phosphate isomerase A (Pseudomonas savastanoi pv. phaseolicola (strain 1448A / Race 6) (Pseudomonas syringae pv. phaseolicola (strain 1448A / Race 6))).